The primary structure comprises 400 residues: Large envelope protein (400 aa).

M1 is modified (N-acetylmethionine). G2 carries N-myristoyl glycine; by host lipidation. Positions 2-119 (GGWSSKPRQG…PPLRDSHPQA (118 aa)) are pre-S1. The pre-S stretch occupies residues 2 to 174 (GGWSSKPRQG…FSRIGDPALN (173 aa)). Over 2–181 (GGWSSKPRQG…ALNMENITSG (180 aa)) the chain is Virion surface; in external conformation. The Intravirion; in internal conformation portion of the chain corresponds to 2–253 (GGWSSKPRQG…PGYRWMCLRR (252 aa)). Residue W4 is glycosylated (N-linked (GlcNAc...) asparagine). Positions 85–118 (LTTVPAAPPPASSNRQSGKQPTPISPPLRDSHPQ) are disordered. Residues 96–106 (SSNRQSGKQPT) are compositionally biased toward polar residues. The segment at 120–174 (MQWNSTTFHQTLQDPRVRGLYFPAGGSSSGTVNPVPTTASPISSIFSRIGDPALN) is pre-S2. Residues 182 to 202 (FLGPLLVLQAGFFLLTRILTI) traverse the membrane as a helical segment. Over 203-253 (PQSLDSWWTSLNFLGGTTVCLGQNSQSPISNHSPTSCPPTCPGYRWMCLRR) the chain is Intravirion; in external conformation. The helical transmembrane segment at 254–274 (FIIFLFILLLCLIFLLVLLDY) threads the bilayer. The Virion surface portion of the chain corresponds to 275–348 (QGMLPVCPLI…WASARFSWLS (74 aa)). A glycan (N-linked (GlcNAc...) asparagine; by host) is linked at N320. A helical membrane pass occupies residues 349 to 369 (LLVPFVQWFVGLSPTVWLSVI). The Intravirion portion of the chain corresponds to 370-375 (WMMWYW). A helical membrane pass occupies residues 376–398 (GPSLYSILSPFLPLLPIFFCLWV). At 399-400 (YI) the chain is on the virion surface side.

Belongs to the orthohepadnavirus major surface antigen family. In its internal form (Li-HBsAg), interacts with the capsid protein and with the isoform S. Interacts with host chaperone CANX. In terms of assembly, associates with host chaperone CANX through its pre-S2 N glycan; this association may be essential for isoform M proper secretion. As to quaternary structure, interacts with isoform L. Interacts with the antigens of satellite virus HDV (HDVAgs); this interaction is required for encapsidation of HDV genomic RNA. In terms of processing, isoform M is N-terminally acetylated by host at a ratio of 90%, and N-glycosylated by host at the pre-S2 region. Myristoylated.

The protein resides in the virion membrane. The large envelope protein exists in two topological conformations, one which is termed 'external' or Le-HBsAg and the other 'internal' or Li-HBsAg. In its external conformation the protein attaches the virus to cell receptors and thereby initiating infection. This interaction determines the species specificity and liver tropism. This attachment induces virion internalization predominantly through caveolin-mediated endocytosis. The large envelope protein also assures fusion between virion membrane and endosomal membrane. In its internal conformation the protein plays a role in virion morphogenesis and mediates the contact with the nucleocapsid like a matrix protein. In terms of biological role, the middle envelope protein plays an important role in the budding of the virion. It is involved in the induction of budding in a nucleocapsid independent way. In this process the majority of envelope proteins bud to form subviral lipoprotein particles of 22 nm of diameter that do not contain a nucleocapsid. This chain is Large envelope protein, found in Homo sapiens (Human).